A 361-amino-acid chain; its full sequence is Phosphoserine aminotransferase (361 aa).

R43 contacts L-glutamate. Pyridoxal 5'-phosphate contacts are provided by residues 77 to 78 (AS), W103, T153, D173, and Q196. Residue K197 is modified to N6-(pyridoxal phosphate)lysine. 238–239 (NT) is a binding site for pyridoxal 5'-phosphate.

The protein belongs to the class-V pyridoxal-phosphate-dependent aminotransferase family. SerC subfamily. In terms of assembly, homodimer. The cofactor is pyridoxal 5'-phosphate.

It localises to the cytoplasm. The catalysed reaction is O-phospho-L-serine + 2-oxoglutarate = 3-phosphooxypyruvate + L-glutamate. It carries out the reaction 4-(phosphooxy)-L-threonine + 2-oxoglutarate = (R)-3-hydroxy-2-oxo-4-phosphooxybutanoate + L-glutamate. The protein operates within amino-acid biosynthesis; L-serine biosynthesis; L-serine from 3-phospho-D-glycerate: step 2/3. It functions in the pathway cofactor biosynthesis; pyridoxine 5'-phosphate biosynthesis; pyridoxine 5'-phosphate from D-erythrose 4-phosphate: step 3/5. In terms of biological role, catalyzes the reversible conversion of 3-phosphohydroxypyruvate to phosphoserine and of 3-hydroxy-2-oxo-4-phosphonooxybutanoate to phosphohydroxythreonine. This is Phosphoserine aminotransferase from Pseudomonas aeruginosa (strain LESB58).